A 177-amino-acid polypeptide reads, in one-letter code: Large ribosomal subunit protein uL10 (177 aa).

It belongs to the universal ribosomal protein uL10 family. Part of the ribosomal stalk of the 50S ribosomal subunit. The N-terminus interacts with L11 and the large rRNA to form the base of the stalk. The C-terminus forms an elongated spine to which L12 dimers bind in a sequential fashion forming a multimeric L10(L12)X complex.

Forms part of the ribosomal stalk, playing a central role in the interaction of the ribosome with GTP-bound translation factors. This chain is Large ribosomal subunit protein uL10, found in Leptospira borgpetersenii serovar Hardjo-bovis (strain JB197).